Reading from the N-terminus, the 455-residue chain is Tubulin delta chain (455 aa).

143 to 149 (AGGTGSG) lines the GTP pocket.

The protein belongs to the tubulin family. As to quaternary structure, found in a complex with TEDC1, TEDC2, TUBE1 and TUBD1. Highly expressed in testis.

It is found in the cell projection. The protein resides in the cilium. The protein localises to the cytoplasm. Its subcellular location is the cytoskeleton. It localises to the microtubule organizing center. It is found in the centrosome. The protein resides in the centriole. The protein localises to the nucleus. Functionally, acts as a positive regulator of hedgehog signaling and regulates ciliary function. This chain is Tubulin delta chain (Tubd1), found in Mus musculus (Mouse).